The chain runs to 704 residues: DNA ligase (704 aa).

NAD(+)-binding positions include 43–47 (DADYD), 92–93 (SL), and Glu124. Catalysis depends on Lys126, which acts as the N6-AMP-lysine intermediate. Arg147, Glu182, Lys298, and Lys322 together coordinate NAD(+). Zn(2+) is bound by residues Cys427, Cys430, Cys445, and Cys451. The 80-residue stretch at 625 to 704 (PVESPIAGKI…DAWLRLIGDA (80 aa)) folds into the BRCT domain.

It belongs to the NAD-dependent DNA ligase family. LigA subfamily. Mg(2+) is required as a cofactor. Mn(2+) serves as cofactor.

It carries out the reaction NAD(+) + (deoxyribonucleotide)n-3'-hydroxyl + 5'-phospho-(deoxyribonucleotide)m = (deoxyribonucleotide)n+m + AMP + beta-nicotinamide D-nucleotide.. DNA ligase that catalyzes the formation of phosphodiester linkages between 5'-phosphoryl and 3'-hydroxyl groups in double-stranded DNA using NAD as a coenzyme and as the energy source for the reaction. It is essential for DNA replication and repair of damaged DNA. The polypeptide is DNA ligase (Cereibacter sphaeroides (strain ATCC 17025 / ATH 2.4.3) (Rhodobacter sphaeroides)).